The sequence spans 478 residues: Ribosome biogenesis protein NOP53 (478 aa).

Gly residues predominate over residues 1-10; that stretch reads MAAGGSGVGG. The disordered stretch occupies residues 1–51; that stretch reads MAAGGSGVGGKRSSKSDADSGFLGLRPTSVDPALRRRRRGPRNKKRGWRRL. Ala-2 carries the N-acetylalanine modification. Ser-29 is subject to Phosphoserine. A compositionally biased stretch (basic residues) spans 35–49; the sequence is RRRRRGPRNKKRGWR. A phosphoserine mark is found at Ser-93 and Ser-305. Residues 148–431 are mediates interaction with CDKN2A/isoform tumor suppressor ARF; that stretch reads KEQLWEKLAK…SELTDSLRTL (284 aa). Positions 181 to 478 are mediates interaction with NF2; the sequence is KPGPQDTVER…EKRAFREIQL (298 aa). Residues 303-344 are disordered; the sequence is EESDGEGEPGQGEGPEAGDAEVCPTPARLATTEKKTEQQRRR. The segment covering 333 to 342 has biased composition (basic and acidic residues); it reads TTEKKTEQQR. Residues 342-386 form a mediates interaction with human herpesvirus 8 protein ORF16 region; it reads RRREKAVHRLRVQQAALRAARLRHQELFRLRGIKAQVALRLAELA. 2 nucleolar localization signal regions span residues 347 to 395 and 396 to 478; these read AVHR…RQAR and REAE…EIQL.

It belongs to the NOP53 family. In terms of assembly, homooligomer. Interacts with PTEN; regulates PTEN phosphorylation and increases its stability. Interacts with RPL11; retains RPL11 into the nucleolus. Interacts with CDKN2A/isoform tumor suppressor ARF; the interaction is direct and promotes ARF nucleoplasmic relocalization and ubiquitin-mediated proteasomal degradation. Interacts with NPM1; the interaction is direct and competitive with MYC. Interacts with NF2 (via FERM domain); the interaction is direct. Interacts with p53/TP53 (via the oligomerization region); the interaction is direct and may prevent the MDM2-mediated proteasomal degradation of p53/TP53. Interacts with RIGI; may regulate RIGI through USP15-mediated 'Lys-63'-linked deubiquitination. Interacts with UBTF. As to quaternary structure, (Microbial infection) Interacts with herpes simplex virus 1 early proteins ICP22 and ICP0. (Microbial infection) Interacts with Human herpesvirus 8 protein ORF16; may sequester ORF16 in host nucleolus and reduce its antiapoptotic activity. Ubiquitin-mediated proteasomal degradation is regulated by c-JUN. It is associated with relocalization to the nucleoplasm and decreased homooligomerization. Post-translationally, phosphorylated upon DNA damage probably by ATM and DNA-PK; may regulate NOP53 degradation. Expressed at high levels in heart and pancreas, moderate levels in placenta, liver, skeletal muscle, and kidney, and low levels in brain and lung.

It is found in the nucleus. The protein localises to the nucleolus. It localises to the nucleoplasm. Nucleolar protein which is involved in the integration of the 5S RNP into the ribosomal large subunit during ribosome biogenesis. In ribosome biogenesis, may also play a role in rRNA transcription. Also functions as a nucleolar sensor that regulates the activation of p53/TP53 in response to ribosome biogenesis perturbation, DNA damage and other stress conditions. DNA damage or perturbation of ribosome biogenesis disrupt the interaction between NOP53 and RPL11 allowing RPL11 transport to the nucleoplasm where it can inhibit MDM2 and allow p53/TP53 activation. It may also positively regulate the function of p53/TP53 in cell cycle arrest and apoptosis through direct interaction, preventing its MDM2-dependent ubiquitin-mediated proteasomal degradation. Originally identified as a tumor suppressor, it may also play a role in cell proliferation and apoptosis by positively regulating the stability of PTEN, thereby antagonizing the PI3K-AKT/PKB signaling pathway. May also inhibit cell proliferation and increase apoptosis through its interaction with NF2. May negatively regulate NPM1 by regulating its nucleoplasmic localization, oligomerization and ubiquitin-mediated proteasomal degradation. Thereby, may prevent NPM1 interaction with MYC and negatively regulate transcription mediated by the MYC-NPM1 complex. May also regulate cellular aerobic respiration. In the cellular response to viral infection, may play a role in the attenuation of interferon-beta through the inhibition of RIGI. In Homo sapiens (Human), this protein is Ribosome biogenesis protein NOP53.